A 277-amino-acid polypeptide reads, in one-letter code: Large ribosomal subunit protein uL2 (277 aa).

Disordered regions lie at residues 37–60 (KNST…GHKH) and 223–264 (VVMN…NKRT). Positions 39–49 (STAGRNNNGHI) are enriched in polar residues. The segment covering 50–60 (TTRHKGGGHKH) has biased composition (basic residues). The segment covering 229-244 (DHPHGGGEGRTGEARE) has biased composition (basic and acidic residues).

It belongs to the universal ribosomal protein uL2 family. In terms of assembly, part of the 50S ribosomal subunit. Forms a bridge to the 30S subunit in the 70S ribosome.

One of the primary rRNA binding proteins. Required for association of the 30S and 50S subunits to form the 70S ribosome, for tRNA binding and peptide bond formation. It has been suggested to have peptidyltransferase activity; this is somewhat controversial. Makes several contacts with the 16S rRNA in the 70S ribosome. This is Large ribosomal subunit protein uL2 from Neisseria gonorrhoeae (strain ATCC 700825 / FA 1090).